A 201-amino-acid polypeptide reads, in one-letter code: Holliday junction branch migration complex subunit RuvA (201 aa).

The domain I stretch occupies residues 1–63 (MYDYIKGTVT…EDNISLFGFQ (63 aa)). Residues 64-142 (TTEERYLFKK…DVVASEIVYV (79 aa)) form a domain II region. Residues 143-153 (APENDMVAGLS) are flexible linker. Residues 153 to 201 (SPQLEEAVLALEALGYSTRELKKVIPKLSKEEDLTSDAYIKLALQLMTK) form a domain III region.

It belongs to the RuvA family. In terms of assembly, homotetramer. Forms an RuvA(8)-RuvB(12)-Holliday junction (HJ) complex. HJ DNA is sandwiched between 2 RuvA tetramers; dsDNA enters through RuvA and exits via RuvB. An RuvB hexamer assembles on each DNA strand where it exits the tetramer. Each RuvB hexamer is contacted by two RuvA subunits (via domain III) on 2 adjacent RuvB subunits; this complex drives branch migration. In the full resolvosome a probable DNA-RuvA(4)-RuvB(12)-RuvC(2) complex forms which resolves the HJ.

It localises to the cytoplasm. The RuvA-RuvB-RuvC complex processes Holliday junction (HJ) DNA during genetic recombination and DNA repair, while the RuvA-RuvB complex plays an important role in the rescue of blocked DNA replication forks via replication fork reversal (RFR). RuvA specifically binds to HJ cruciform DNA, conferring on it an open structure. The RuvB hexamer acts as an ATP-dependent pump, pulling dsDNA into and through the RuvAB complex. HJ branch migration allows RuvC to scan DNA until it finds its consensus sequence, where it cleaves and resolves the cruciform DNA. This is Holliday junction branch migration complex subunit RuvA from Listeria monocytogenes serotype 4b (strain CLIP80459).